Consider the following 359-residue polypeptide: MQAATVVINRRALRHNLQRLRELAPASKMVAVVKANAYGHGLLETARTLPDADAFGVARLEEALRLRAGGITKPVLLLEGFFDARDLPTISAQHFHTAVHNEEQLAALEEASLDEPVTVWMKLDTGMHRLGVRPEQAEAFYHRLTQCKNVRQPVNIVSHFARADEPKCGATEKQLAIFNTFCEGKPGQRSIAASGGILLWPQSHFDWVRPGIILYGVSPLEDRSIGADFGCQPVMSLTSSLIAVREHKAGEPVGYGGTWVSERDTRLGVVAMGYGDGYPRAAPSGTPVLVNGREVPIVGRVAMDMICVDLGPQAQDKAGDPVILWGEGLPVERIAEMTKVSAYELITRLTSRVAMKYVD.

Lys-34 acts as the Proton acceptor; specific for D-alanine in catalysis. Position 34 is an N6-(pyridoxal phosphate)lysine (Lys-34). Arg-129 lines the substrate pocket. Tyr-255 (proton acceptor; specific for L-alanine) is an active-site residue. Met-303 contacts substrate.

It belongs to the alanine racemase family. In terms of assembly, monomer but homodimer in the presence of the substrate. Pyridoxal 5'-phosphate is required as a cofactor.

It catalyses the reaction L-alanine = D-alanine. It participates in amino-acid biosynthesis; D-alanine biosynthesis; D-alanine from L-alanine: step 1/1. It functions in the pathway cell wall biogenesis; peptidoglycan biosynthesis. Its function is as follows. Catalyzes the interconversion of L-alanine and D-alanine. The sequence is that of Alanine racemase, biosynthetic (alr) from Shigella sonnei.